The chain runs to 1171 residues: ATP-dependent helicase/deoxyribonuclease subunit B (1171 aa).

Residues Met-1–Ala-390 enclose the UvrD-like helicase ATP-binding domain. Gly-8–Ser-15 contributes to the ATP binding site. A UvrD-like helicase C-terminal domain is found at Met-281 to Asp-587. 4 residues coordinate [4Fe-4S] cluster: Cys-805, Cys-1129, Cys-1132, and Cys-1138.

The protein belongs to the helicase family. AddB/RexB type 1 subfamily. In terms of assembly, heterodimer of AddA and AddB. Mg(2+) serves as cofactor. Requires [4Fe-4S] cluster as cofactor.

The heterodimer acts as both an ATP-dependent DNA helicase and an ATP-dependent, dual-direction single-stranded exonuclease. Recognizes the chi site generating a DNA molecule suitable for the initiation of homologous recombination. The AddB subunit has 5' -&gt; 3' nuclease activity but not helicase activity. The polypeptide is ATP-dependent helicase/deoxyribonuclease subunit B (Bacillus cereus (strain ZK / E33L)).